Consider the following 759-residue polypeptide: Nucleolar RNA helicase 2-A (759 aa).

Residues 1 to 154 are disordered; it reads MPVKVYAEEM…KKRKTDTTEI (154 aa). The segment covering 77–86 has biased composition (acidic residues); that stretch reads ETAEECDGEQ. The Q motif motif lies at 179–207; sequence GDFSKFPLSKETIKNLQAKGVSYLFPIQS. The Helicase ATP-binding domain occupies 210–389; that stretch reads FHTAYSGKDV…KKYMRKQFEK (180 aa). 223–230 serves as a coordination point for ATP; that stretch reads ARTGTGKT. Residues 332 to 335 carry the DEAD box motif; that stretch reads DEVD. One can recognise a Helicase C-terminal domain in the interval 422 to 566; it reads DLVQVYSGSH…VGVPSLLNVA (145 aa). Residues 709 to 759 are disordered; the sequence is QESERNFDGPRNRGFGGRGRRPFDRRNNSRNSNRGGGGRGRNRNGGFRRGR. The segment covering 710 to 719 has biased composition (basic and acidic residues); sequence ESERNFDGPR. The segment covering 748 to 759 has biased composition (basic residues); the sequence is GRNRNGGFRRGR.

This sequence belongs to the DEAD box helicase family. DDX21/DDX50 subfamily. As to expression, widely expressed. Expressed at higher level in stomach. Expressed at higher level compared to ddx21-b.

It is found in the nucleus. Its subcellular location is the nucleolus. The protein localises to the nucleoplasm. The protein resides in the cytoplasm. It localises to the cytosol. It is found in the mitochondrion. The enzyme catalyses ATP + H2O = ADP + phosphate + H(+). In terms of biological role, RNA helicase that acts as a sensor of the transcriptional status of both RNA polymerase (Pol) I and II: promotes ribosomal RNA (rRNA) processing and transcription from polymerase II (Pol II). Binds various RNAs, such as rRNAs, snoRNAs, 7SK and, at lower extent, mRNAs. In the nucleolus, localizes to rDNA locus, where it directly binds rRNAs and snoRNAs, and promotes rRNA transcription, processing and modification. Required for rRNA 2'-O-methylation, possibly by promoting the recruitment of late-acting snoRNAs SNORD56 and SNORD58 with pre-ribosomal complexes. In the nucleoplasm, binds 7SK RNA and is recruited to the promoters of Pol II-transcribed genes: acts by facilitating the release of P-TEFb from inhibitory 7SK snRNP in a manner that is dependent on its helicase activity, thereby promoting transcription of its target genes. Required to prevent R-loop-associated DNA damage and transcription-associated genomic instability. In Xenopus laevis (African clawed frog), this protein is Nucleolar RNA helicase 2-A (ddx21-a).